A 633-amino-acid polypeptide reads, in one-letter code: Proline-rich receptor-like protein kinase PERK4 (633 aa).

Positions 1–29 are enriched in low complexity; the sequence is MASSPESAPPTNSTSSPSPPSNTNSTTSS. Residues 1 to 145 are disordered; that stretch reads MASSPESAPP…GSSGGGGGGR (145 aa). The Extracellular segment spans residues 1–151; it reads MASSPESAPP…GGGRSNTNTA (151 aa). Residues N12 and N24 are each glycosylated (N-linked (GlcNAc...) asparagine). 2 stretches are compositionally biased toward pro residues: residues 30–41 and 48–65; these read PPAPSPPSPTPP and SPPP…PNPP. N66 carries an N-linked (GlcNAc...) asparagine glycan. A compositionally biased stretch (gly residues) spans 77-90; it reads QGGGGERGNGGNNG. Residues 106–135 are compositionally biased toward low complexity; the sequence is SRSNGDNGGSRSSPPGDTGGSRSDNPPSSG. Over residues 136 to 145 the composition is skewed to gly residues; sequence GSSGGGGGGR. Residues 152 to 172 traverse the membrane as a helical segment; the sequence is IIVGVLVGAGLLMIVLIIVCL. The Cytoplasmic portion of the chain corresponds to 173–633; sequence RRKKKRKDSF…MGTKSPTPPK (461 aa). A compositionally biased stretch (low complexity) spans 193–222; that stretch reads QYYGNNNNNNASQNYPNWHLNSQGQNQQST. The interval 193–255 is disordered; that stretch reads QYYGNNNNNN…SMYSGPSRPV (63 aa). Phosphothreonine is present on T273. Positions 284–562 constitute a Protein kinase domain; it reads FTDANLLGQG…VRALEGEVSL (279 aa). ATP-binding positions include 290–298 and K312; that span reads LGQGGFGYV. Y357 bears the Phosphotyrosine mark. D408 functions as the Proton acceptor in the catalytic mechanism. Residue S441 is modified to Phosphoserine. Phosphothreonine is present on residues T442 and T447. Phosphotyrosine is present on Y455. Residues 608 to 619 show a composition bias toward polar residues; sequence FPVSDCEGTSSN. The tract at residues 608–633 is disordered; that stretch reads FPVSDCEGTSSNDSRDMGTKSPTPPK.

It belongs to the protein kinase superfamily. Ser/Thr protein kinase family. In terms of tissue distribution, mostly expressed in inflorescence bolts. Also present in roots, stems, germinated seeds, cotyledons, pollen, stamen and stigma.

The protein localises to the cell membrane. The catalysed reaction is L-seryl-[protein] + ATP = O-phospho-L-seryl-[protein] + ADP + H(+). The enzyme catalyses L-threonyl-[protein] + ATP = O-phospho-L-threonyl-[protein] + ADP + H(+). With respect to regulation, activated by ABA and Ca(2+). In terms of biological role, required during abscisic acid (ABA)-mediated activation of Ca(2+) channels. Regulates ABA signaling pathways. Modulates the expression of genes related to cell elongation and ABA signaling during root growth. In Arabidopsis thaliana (Mouse-ear cress), this protein is Proline-rich receptor-like protein kinase PERK4 (PERK4).